We begin with the raw amino-acid sequence, 464 residues long: Protein FAM90A13 (464 aa).

Disordered regions lie at residues 1–42 (MMAR…DPRL), 69–389 (VPAT…HDGA), and 411–437 (APSF…SEAP). 2 stretches are compositionally biased toward basic and acidic residues: residues 74-89 (GKKE…KPRG) and 97-114 (NKDK…DPQR). Positions 180–197 (LASLSPLRKASLSSSSSL) are enriched in low complexity.

The protein belongs to the FAM90 family.

This is Protein FAM90A13 from Homo sapiens (Human).